Consider the following 903-residue polypeptide: Protein translocase subunit SecA (903 aa).

ATP-binding positions include Gln89, 107–111 (GEGKT), and Asp502. Positions 886, 888, 897, and 898 each coordinate Zn(2+).

It belongs to the SecA family. In terms of assembly, monomer and homodimer. Part of the essential Sec protein translocation apparatus which comprises SecA, SecYEG and auxiliary proteins SecDF-YajC and YidC. The cofactor is Zn(2+).

The protein resides in the cell inner membrane. It localises to the cytoplasm. The enzyme catalyses ATP + H2O + cellular proteinSide 1 = ADP + phosphate + cellular proteinSide 2.. Its function is as follows. Part of the Sec protein translocase complex. Interacts with the SecYEG preprotein conducting channel. Has a central role in coupling the hydrolysis of ATP to the transfer of proteins into and across the cell membrane, serving both as a receptor for the preprotein-SecB complex and as an ATP-driven molecular motor driving the stepwise translocation of polypeptide chains across the membrane. In Rhizobium meliloti (strain 1021) (Ensifer meliloti), this protein is Protein translocase subunit SecA.